Here is a 1172-residue protein sequence, read N- to C-terminus: MRTVCYGKRERLTFGRIHDAVKVPNLISIQIDSYKDFLENGLIEVLKKFSPITSQPHKGDLKKGEKGFVLEFVSTKVGQPNAPVEECKQKGLTYTVPVYTTVRITDVNTGEMREEEAFLGSIPHMTENGTFIINGAERVIVSQLVRAPGVYFVDEIPKTQVVSPIYVAHFLPVRGAWLELLYYSADNMFYARIDRKRRINLFLLFKALGFTDDLEILDLFPDPIDADDEYTMEKAVGSIILHDVVLDGKKIVERGGVLTKAASQAILESKIATVVRAHPAAQKTLEKMVDTYGEVDSSKAYVEIFRKLKPGEIPRVNTAKAYLTSLYFSTERFELSDVGRYKINKRLTQAYRRYLAQVKGLPEEEVESVEYNPEDPVLTPMDIVLASRYLLDVSKNPEIMDTKDHLGNKRVRTVGELIKLEFERAFARAQRLIQERLTLYASLDKISIQSLINVKTIIAGINQFFATSPLSQFMEQVNPLAELTHKRRLTAVGPGGLKRERARFEVRDVHHSHYGRMCPIETPEGANIGLITSLAVYANIDKFGFLTTPYRKVVNGVVTSEIVYLTADEEEHYNIAPCTIKIDKDGRILDERVPVRFMERLQFVEKNKVQFMDVSTKQIVSVSTSLIPFLEHDDANRALMGSNMQRQAVPLVKPEAPFVATGVEYDAALYSGYVVQAKYSGRVKKVDSRKIVIERMDENGKPVLKNGKPVLDEYRLMKFMRTNQDTTVNQRPIVDIGDIVKAGDVIADGPATDMGELALGKNVLVAFMPWEGYNFEDAILVSEELLEEDTFTSIHIEVYETQARDTRLGPEEITVDIPNVSKEALRNLDENGIVRVGAYVGPQDILVGKVTPKGEGETTPEEKIIRSVFGERGKDVKDTSLRLPHGTDGRVIDVKVFDKDEETDLGAGVNKLVKVYVACRKTLEVGDKLAGRHGNKGVVSKILPKEDMPFLPDGTPVQLVLSPLGVPSRMNVGQILETHLGWLAKLTRNWFATPVFDGAKENEILPWLYEERRAVGLEEGDSDNEPSGKVVLRDGRTGESFAEPIVVGYIYMMKLVHIAKDKIHARSTGPYSLIHQQPLGGKAQFGGQRFGEMEVWALEAHGAAHTLNEMLTIKSDDIKGRNEVYKAILKGKNIPEPGIPESFRVLIKELRGLALDIRVYDENGNEIDIDRV.

The protein belongs to the RNA polymerase beta chain family. The RNAP catalytic core consists of 2 alpha, 1 beta, 1 beta' and 1 omega subunit. When a sigma factor is associated with the core the holoenzyme is formed, which can initiate transcription.

The enzyme catalyses RNA(n) + a ribonucleoside 5'-triphosphate = RNA(n+1) + diphosphate. Its function is as follows. DNA-dependent RNA polymerase catalyzes the transcription of DNA into RNA using the four ribonucleoside triphosphates as substrates. In Pseudothermotoga lettingae (strain ATCC BAA-301 / DSM 14385 / NBRC 107922 / TMO) (Thermotoga lettingae), this protein is DNA-directed RNA polymerase subunit beta.